Consider the following 782-residue polypeptide: General transcription and DNA repair factor IIH helicase/translocase subunit XPB (782 aa).

Basic and acidic residues predominate over residues 1 to 11; that stretch reads MGKRDRVDRDK. Residues 1 to 52 form a disordered region; sequence MGKRDRVDRDKKKSKKRQYEEEEEDEDDAPGNESQEAVPSAAGKQVDESSTK. Positions 6 to 18 match the Nuclear localization signal motif; that stretch reads RVDRDKKKSKKRQ. A compositionally biased stretch (acidic residues) spans 20–30; sequence EEEEEDEDDAP. Ser34 bears the Phosphoserine mark. The Helicase ATP-binding domain occupies 328-489; that stretch reads FGNGRARSGV…LNFLIGPKLY (162 aa). 341 to 348 provides a ligand contact to ATP; sequence PCGAGKSL. Residues 442-445 carry the DEVH box motif; sequence EVHT. The Helicase C-terminal domain maps to 543–703; that stretch reads ACQFLIKFHE…AGMEEEELAF (161 aa). Ser686 carries the phosphoserine modification. Ser751 is modified (phosphoserine; by CK2).

The protein belongs to the helicase family. RAD25/XPB subfamily. Component of the 7-subunit TFIIH core complex composed of XPB/ERCC3, XPD/ERCC2, GTF2H1, GTF2H2, GTF2H3, GTF2H4 and GTF2H5, which is active in NER. The core complex associates with the 3-subunit CDK-activating kinase (CAK) module composed of CCNH/cyclin H, CDK7 and MNAT1 to form the 10-subunit holoenzyme (holo-TFIIH) active in transcription. Interacts with PUF60. Interacts with ATF7IP. Interacts with KAT2A; leading to KAT2A recruitment to promoters and acetylation of histones. Part of TBP-based Pol II pre-initiation complex (PIC), in which Pol II core assembles with general transcription factors and other specific initiation factors including GTF2E1, GTF2E2, GTF2F1, GTF2F2, TCEA1, ERCC2, ERCC3, GTF2H2, GTF2H3, GTF2H4, GTF2H5, GTF2A1, GTF2A2, GTF2B and TBP; this large multi-subunit PIC complex mediates DNA unwinding and targets Pol II core to the transcription start site where the first phosphodiester bond forms. In terms of processing, phosphorylation on Ser-751 by CK2 controls the 5'-excision activity of ERCC1-XPF endonuclease; phosphorylated protein inhibits the excision activity and thus NER. Dephosphorylation reactivates the 5'-excision step. Phosphorylation has no effect on transcription or the 3'-5' helicase activity.

It localises to the nucleus. It carries out the reaction Couples ATP hydrolysis with the unwinding of duplex DNA by translocating in the 3'-5' direction.. The catalysed reaction is ATP + H2O = ADP + phosphate + H(+). Its activity is regulated as follows. Phosphorylation on Ser-751 by CK2 controls the 5'-excision activity of ERCC1-XPF endonuclease; phosphorylated protein inhibits the excision activity and thus NER. ATPase activity is stimulated by TFIIH subunit p52 (GTF2H4). DNA translocase activity by this subunit in TFIIH is stimulated by XPA, ERCC5/XPG and XFP plus ERCC1. In terms of biological role, ATP-dependent 3'-5' DNA helicase/translocase; binds dsDNA rather than ssDNA, unzipping it in a translocase rather than classical helicase activity. Component of the general transcription and DNA repair factor IIH (TFIIH) core complex. When complexed to CDK-activating kinase (CAK), involved in RNA transcription by RNA polymerase II. The ATPase activity of XPB/ERCC3, but not its helicase activity, is required for DNA opening; it may wrap around the damaged DNA wedging it open, causing localized melting and twisting that allows XPD/ERCC2 helicase to anchor. The ATP-dependent helicase activity of XPB/ERCC3 may be required for promoter escape. Also involved in transcription-coupled nucleotide excision repair (NER) of damaged DNA. In NER, TFIIH acts by opening DNA around the lesion to allow the excision of the damaged oligonucleotide and its replacement by a new DNA fragment. The structure of the TFIIH transcription complex differs from the NER-TFIIH complex; large movements by XPD/ERCC2 and XPB/ERCC3 are stabilized by XPA. The protein is General transcription and DNA repair factor IIH helicase/translocase subunit XPB (Ercc3) of Rattus norvegicus (Rat).